Consider the following 653-residue polypeptide: Macrolide export ATP-binding/permease protein MacB (653 aa).

In terms of domain architecture, ABC transporter spans Leu-6–Pro-244. Residue Gly-42–Ser-49 participates in ATP binding. A run of 4 helical transmembrane segments spans residues Phe-277–Gly-297, Leu-526–Met-546, Leu-587–Leu-607, and Phe-617–Pro-637.

The protein belongs to the ABC transporter superfamily. Macrolide exporter (TC 3.A.1.122) family. As to quaternary structure, homodimer.

It is found in the cell inner membrane. In terms of biological role, non-canonical ABC transporter that contains transmembrane domains (TMD), which form a pore in the inner membrane, and an ATP-binding domain (NBD), which is responsible for energy generation. Confers resistance against macrolides. The chain is Macrolide export ATP-binding/permease protein MacB from Bradyrhizobium diazoefficiens (strain JCM 10833 / BCRC 13528 / IAM 13628 / NBRC 14792 / USDA 110).